The sequence spans 343 residues: UDP-N-acetylglucosamine--N-acetylmuramyl-(pentapeptide) pyrophosphoryl-undecaprenol N-acetylglucosamine transferase (343 aa).

UDP-N-acetyl-alpha-D-glucosamine-binding positions include 10 to 12 (TGG), Asn-113, Ser-174, and Gln-275.

Belongs to the glycosyltransferase 28 family. MurG subfamily.

The protein resides in the cell membrane. It catalyses the reaction di-trans,octa-cis-undecaprenyl diphospho-N-acetyl-alpha-D-muramoyl-L-alanyl-D-glutamyl-meso-2,6-diaminopimeloyl-D-alanyl-D-alanine + UDP-N-acetyl-alpha-D-glucosamine = di-trans,octa-cis-undecaprenyl diphospho-[N-acetyl-alpha-D-glucosaminyl-(1-&gt;4)]-N-acetyl-alpha-D-muramoyl-L-alanyl-D-glutamyl-meso-2,6-diaminopimeloyl-D-alanyl-D-alanine + UDP + H(+). Its pathway is cell wall biogenesis; peptidoglycan biosynthesis. Cell wall formation. Catalyzes the transfer of a GlcNAc subunit on undecaprenyl-pyrophosphoryl-MurNAc-pentapeptide (lipid intermediate I) to form undecaprenyl-pyrophosphoryl-MurNAc-(pentapeptide)GlcNAc (lipid intermediate II). The protein is UDP-N-acetylglucosamine--N-acetylmuramyl-(pentapeptide) pyrophosphoryl-undecaprenol N-acetylglucosamine transferase of Wolbachia sp. subsp. Drosophila simulans (strain wRi).